A 428-amino-acid polypeptide reads, in one-letter code: 5'-nucleotidase domain-containing protein 4 (428 aa).

Asp-22 (nucleophile) is an active-site residue. Mg(2+) is bound by residues Asp-22, Asp-24, and Asp-317. The active-site Proton donor is Asp-24.

It belongs to the 5'(3')-deoxyribonucleotidase family.

In Homo sapiens (Human), this protein is 5'-nucleotidase domain-containing protein 4 (NT5DC4).